The sequence spans 182 residues: Large ribosomal subunit protein uL10 (182 aa).

This sequence belongs to the universal ribosomal protein uL10 family. In terms of assembly, part of the ribosomal stalk of the 50S ribosomal subunit. The N-terminus interacts with L11 and the large rRNA to form the base of the stalk. The C-terminus forms an elongated spine to which L12 dimers bind in a sequential fashion forming a multimeric L10(L12)X complex.

Forms part of the ribosomal stalk, playing a central role in the interaction of the ribosome with GTP-bound translation factors. This is Large ribosomal subunit protein uL10 from Chloroflexus aurantiacus (strain ATCC 29364 / DSM 637 / Y-400-fl).